The chain runs to 119 residues: Ribosome-binding factor A (119 aa).

Belongs to the RbfA family. As to quaternary structure, monomer. Binds 30S ribosomal subunits, but not 50S ribosomal subunits or 70S ribosomes.

The protein resides in the cytoplasm. In terms of biological role, one of several proteins that assist in the late maturation steps of the functional core of the 30S ribosomal subunit. Associates with free 30S ribosomal subunits (but not with 30S subunits that are part of 70S ribosomes or polysomes). Required for efficient processing of 16S rRNA. May interact with the 5'-terminal helix region of 16S rRNA. The sequence is that of Ribosome-binding factor A from Geobacter sp. (strain M21).